A 757-amino-acid polypeptide reads, in one-letter code: Mitofusin-2 (757 aa).

The Cytoplasmic portion of the chain corresponds to Met-1 to Val-604. The segment at Lys-30–Arg-94 is part of a helix bundle domain, formed by helices from N-terminal and C-terminal regions. Residues Ala-93–Glu-342 enclose the Dynamin-type G domain. The interval Gly-103–Ser-110 is G1 motif. Ser-106–Thr-111 is a GTP binding site. Thr-111 carries the phosphothreonine; by PINK1 modification. Positions Thr-129–Thr-130 are G2 motif. The G3 motif stretch occupies residues Asp-199–Gly-202. Asn-258 to Asp-261 contacts GTP. Positions Asn-258–Asp-261 are G4 motif. Position 288 (Glu-288) is a region of interest, G5 motif. Positions 305 and 307 each coordinate GTP. A part of a helix bundle domain, formed by helices from N-terminal and C-terminal regions region spans residues Glu-359 to Glu-385. Residues Lys-406–Met-434 are a coiled coil. Residue Ser-442 is modified to Phosphoserine. A helical transmembrane segment spans residues Thr-605 to Val-625. Position 626 (Trp-626) is a topological domain, mitochondrial intermembrane. Residues Lys-627–Tyr-647 form a helical membrane-spanning segment. Over Glu-648–Arg-757 the chain is Cytoplasmic. A coiled-coil region spans residues Phe-696–Ala-738. Residues Glu-722–Leu-753 are part of a helix bundle domain, formed by helices from N-terminal and C-terminal regions.

It belongs to the TRAFAC class dynamin-like GTPase superfamily. Dynamin/Fzo/YdjA family. Mitofusin subfamily. As to quaternary structure, forms homomultimers and heteromultimers with MFN1. Oligomerization is essential for mitochondrion fusion. Interacts with VAT1. Interacts with STOML2; may form heterooligomers. Interacts (phosphorylated) with PRKN. Interacts with EIF2AK3. Interacts with THG1L; THG1L probably functions as a guanyl-nucleotide exchange factor/GEF, activating MFN2. In terms of processing, phosphorylated by PINK1. Ubiquitinated by non-degradative ubiquitin by PRKN, promoting mitochondrial fusion; deubiquitination by USP30 inhibits mitochondrial fusion. Ubiquitinated by HUWE1 when dietary stearate (C18:0) levels are low; ubiquitination inhibits mitochondrial fusion. As to expression, ubiquitous. Expression is markedly reduced in ApoE-knockout mouse atherosclerotic arteries.

It localises to the mitochondrion outer membrane. It catalyses the reaction GTP + H2O = GDP + phosphate + H(+). Its function is as follows. Mitochondrial outer membrane GTPase that mediates mitochondrial clustering and fusion. Mitochondria are highly dynamic organelles, and their morphology is determined by the equilibrium between mitochondrial fusion and fission events. Overexpression induces the formation of mitochondrial networks. Membrane clustering requires GTPase activity and may involve a major rearrangement of the coiled coil domains. Plays a central role in mitochondrial metabolism and may be associated with obesity and/or apoptosis processes. Plays an important role in the regulation of vascular smooth muscle cell proliferation. Involved in the clearance of damaged mitochondria via selective autophagy (mitophagy). Is required for PRKN recruitment to dysfunctional mitochondria. Involved in the control of unfolded protein response (UPR) upon ER stress including activation of apoptosis and autophagy during ER stress. Acts as an upstream regulator of EIF2AK3 and suppresses EIF2AK3 activation under basal conditions. The chain is Mitofusin-2 (Mfn2) from Mus musculus (Mouse).